A 115-amino-acid polypeptide reads, in one-letter code: Large ribosomal subunit protein uL22 (115 aa).

The protein belongs to the universal ribosomal protein uL22 family. In terms of assembly, part of the 50S ribosomal subunit.

This protein binds specifically to 23S rRNA; its binding is stimulated by other ribosomal proteins, e.g. L4, L17, and L20. It is important during the early stages of 50S assembly. It makes multiple contacts with different domains of the 23S rRNA in the assembled 50S subunit and ribosome. Functionally, the globular domain of the protein is located near the polypeptide exit tunnel on the outside of the subunit, while an extended beta-hairpin is found that lines the wall of the exit tunnel in the center of the 70S ribosome. The sequence is that of Large ribosomal subunit protein uL22 from Thioalkalivibrio sulfidiphilus (strain HL-EbGR7).